Reading from the N-terminus, the 199-residue chain is Inner membrane protein E199L (199 aa).

Residues I150–I170 traverse the membrane as a helical segment.

This sequence belongs to the asfivirus E199L family. As to quaternary structure, interacts with host PYCR2; this interaction results in autophagy activation. In terms of processing, contains intramolecular disulfide bonds.

It localises to the virion membrane. The protein localises to the host membrane. Its function is as follows. Essential for viral fusion with host endosomal membrane and core release. Not required for virus morphogenesis and egress. Induces complete autophagy through the interaction with and down-regulation of host PYCR2. This is Inner membrane protein E199L from Ornithodoros (relapsing fever ticks).